The chain runs to 415 residues: Gamma-glutamyl phosphate reductase (415 aa).

This sequence belongs to the gamma-glutamyl phosphate reductase family.

It localises to the cytoplasm. The enzyme catalyses L-glutamate 5-semialdehyde + phosphate + NADP(+) = L-glutamyl 5-phosphate + NADPH + H(+). It functions in the pathway amino-acid biosynthesis; L-proline biosynthesis; L-glutamate 5-semialdehyde from L-glutamate: step 2/2. Functionally, catalyzes the NADPH-dependent reduction of L-glutamate 5-phosphate into L-glutamate 5-semialdehyde and phosphate. The product spontaneously undergoes cyclization to form 1-pyrroline-5-carboxylate. This Listeria monocytogenes serotype 4b (strain F2365) protein is Gamma-glutamyl phosphate reductase.